Reading from the N-terminus, the 253-residue chain is uncharacterized protein (253 aa).

Ser-145 is a binding site for substrate. The Proton acceptor role is filled by Tyr-159.

The protein belongs to the short-chain dehydrogenases/reductases (SDR) family.

This is an uncharacterized protein from Mycobacterium tuberculosis (strain CDC 1551 / Oshkosh).